The sequence spans 286 residues: ATP phosphoribosyltransferase (286 aa).

Belongs to the ATP phosphoribosyltransferase family. Long subfamily. The cofactor is Mg(2+).

Its subcellular location is the cytoplasm. The catalysed reaction is 1-(5-phospho-beta-D-ribosyl)-ATP + diphosphate = 5-phospho-alpha-D-ribose 1-diphosphate + ATP. The protein operates within amino-acid biosynthesis; L-histidine biosynthesis; L-histidine from 5-phospho-alpha-D-ribose 1-diphosphate: step 1/9. Its activity is regulated as follows. Feedback inhibited by histidine. Functionally, catalyzes the condensation of ATP and 5-phosphoribose 1-diphosphate to form N'-(5'-phosphoribosyl)-ATP (PR-ATP). Has a crucial role in the pathway because the rate of histidine biosynthesis seems to be controlled primarily by regulation of HisG enzymatic activity. The protein is ATP phosphoribosyltransferase of Arthrobacter sp. (strain FB24).